The primary structure comprises 292 residues: Elongation factor Ts (292 aa).

The tract at residues 79 to 82 is involved in Mg(2+) ion dislocation from EF-Tu; sequence TDFV.

This sequence belongs to the EF-Ts family.

The protein resides in the cytoplasm. In terms of biological role, associates with the EF-Tu.GDP complex and induces the exchange of GDP to GTP. It remains bound to the aminoacyl-tRNA.EF-Tu.GTP complex up to the GTP hydrolysis stage on the ribosome. This Xanthomonas campestris pv. campestris (strain B100) protein is Elongation factor Ts.